Consider the following 42-residue polypeptide: Photosystem I reaction center subunit IX (42 aa).

A helical transmembrane segment spans residues 7–27 (YLSTAPVLAAVWFTVLAGILI).

The protein belongs to the PsaJ family.

Its subcellular location is the plastid. The protein resides in the chloroplast thylakoid membrane. May help in the organization of the PsaE and PsaF subunits. This chain is Photosystem I reaction center subunit IX, found in Ostreococcus tauri.